Consider the following 231-residue polypeptide: MGQKVNPIGLRLGINRNWESRWFPVKSAIPENISEDYKIRKFLKAKLYYAGINQILIERTAKKLRVTIVAARPGVIIGKKGSEIENLKNEVVALLKKDVTINIKEERRPGSSAQLAAENVAMQLEKRVAFRRAMKKVIQSAQKAGAKGIKISVAGRLGGAEMARTEWYLEGRVPLHTLRAKIDYGFAEAHTTYGNIGVKVWIFKGEVLQKGIQAEKTDEAPKKSRRSRRGR.

Positions isoleucine 39–arginine 107 constitute a KH type-2 domain.

The protein belongs to the universal ribosomal protein uS3 family. In terms of assembly, part of the 30S ribosomal subunit. Forms a tight complex with proteins S10 and S14.

Functionally, binds the lower part of the 30S subunit head. Binds mRNA in the 70S ribosome, positioning it for translation. The chain is Small ribosomal subunit protein uS3 from Campylobacter hominis (strain ATCC BAA-381 / DSM 21671 / CCUG 45161 / LMG 19568 / NCTC 13146 / CH001A).